Consider the following 114-residue polypeptide: Large ribosomal subunit protein bL19 (114 aa).

Belongs to the bacterial ribosomal protein bL19 family.

This protein is located at the 30S-50S ribosomal subunit interface and may play a role in the structure and function of the aminoacyl-tRNA binding site. In Lactococcus lactis subsp. lactis (strain IL1403) (Streptococcus lactis), this protein is Large ribosomal subunit protein bL19.